Consider the following 30-residue polypeptide: Cycloviolin-C (30 aa).

The segment at residues 1 to 30 (GIPCGESCVFIPCLTTVAGCSCKNKVCYRN) is a cross-link (cyclopeptide (Gly-Asn)). 3 disulfide bridges follow: Cys-4-Cys-20, Cys-8-Cys-22, and Cys-13-Cys-27.

Post-translationally, this is a cyclic peptide.

Probably participates in a plant defense mechanism. Has anti-HIV activity. The polypeptide is Cycloviolin-C (Leonia cymosa (Sacha uba)).